Here is a 325-residue protein sequence, read N- to C-terminus: Casein kinase I isoform alpha (325 aa).

Ala-2 bears the N-acetylalanine mark. At Ser-4 the chain carries Phosphoserine. Lys-8 is subject to N6-acetyllysine. One can recognise a Protein kinase domain in the interval Tyr-17–Phe-285. ATP is bound by residues Ile-23–Ile-31 and Lys-46. Asp-136 (proton acceptor) is an active-site residue. Ile-156 bears the Phosphoserine mark.

The protein belongs to the protein kinase superfamily. CK1 Ser/Thr protein kinase family. Casein kinase I subfamily. Interacts with the Axin complex. Interacts with TUT1, leading to TUT1 phosphorylation. Interacts with FAM83A, FAM83B, FAM83C, FAM83D, FAM83E, FAM83F, FAM83G and FAM83H (via DUF1669). Interaction with FAM83H recruits CSNK1A1 to keratin filaments. Phosphorylated by MTOR in response to mitogenic stimulation, leading to its activation.

It is found in the cytoplasm. It localises to the cytoskeleton. The protein resides in the microtubule organizing center. The protein localises to the centrosome. Its subcellular location is the chromosome. It is found in the centromere. It localises to the kinetochore. The protein resides in the nucleus speckle. The protein localises to the cilium basal body. Its subcellular location is the spindle. It catalyses the reaction L-seryl-[protein] + ATP = O-phospho-L-seryl-[protein] + ADP + H(+). The enzyme catalyses L-threonyl-[protein] + ATP = O-phospho-L-threonyl-[protein] + ADP + H(+). Casein kinases are operationally defined by their preferential utilization of acidic proteins such as caseins as substrates. Can phosphorylate a large number of proteins. Participates in Wnt signaling. Phosphorylates CTNNB1 at 'Ser-45'. May phosphorylate PER1 and PER2. May play a role in segregating chromosomes during mitosis. May play a role in keratin cytoskeleton disassembly and thereby, it may regulate epithelial cell migration. Acts as a positive regulator of mTORC1 and mTORC2 signaling in response to nutrients by mediating phosphorylation of DEPTOR inhibitor. Acts as an inhibitor of NLRP3 inflammasome assembly by mediating phosphorylation of NLRP3. This is Casein kinase I isoform alpha (Csnk1a1) from Rattus norvegicus (Rat).